We begin with the raw amino-acid sequence, 198 residues long: Probable chemoreceptor glutamine deamidase CheD (198 aa).

Belongs to the CheD family.

The enzyme catalyses L-glutaminyl-[protein] + H2O = L-glutamyl-[protein] + NH4(+). Probably deamidates glutamine residues to glutamate on methyl-accepting chemotaxis receptors (MCPs), playing an important role in chemotaxis. This chain is Probable chemoreceptor glutamine deamidase CheD, found in Xanthomonas campestris pv. campestris (strain 8004).